The following is a 550-amino-acid chain: DNA mismatch repair protein MutL (550 aa).

The protein belongs to the DNA mismatch repair MutL/HexB family.

Functionally, this protein is involved in the repair of mismatches in DNA. It is required for dam-dependent methyl-directed DNA mismatch repair. May act as a 'molecular matchmaker', a protein that promotes the formation of a stable complex between two or more DNA-binding proteins in an ATP-dependent manner without itself being part of a final effector complex. This Microcystis aeruginosa (strain NIES-843 / IAM M-2473) protein is DNA mismatch repair protein MutL.